The chain runs to 265 residues: tRNA pseudouridine synthase A (265 aa).

The active-site Nucleophile is aspartate 53. Tyrosine 111 contributes to the substrate binding site.

It belongs to the tRNA pseudouridine synthase TruA family. As to quaternary structure, homodimer.

The enzyme catalyses uridine(38/39/40) in tRNA = pseudouridine(38/39/40) in tRNA. In terms of biological role, formation of pseudouridine at positions 38, 39 and 40 in the anticodon stem and loop of transfer RNAs. The chain is tRNA pseudouridine synthase A from Acinetobacter baumannii (strain ACICU).